Here is a 159-residue protein sequence, read N- to C-terminus: Phosphopantetheine adenylyltransferase (159 aa).

Thr10 lines the substrate pocket. Residues 10–11 (TF) and His18 each bind ATP. Substrate is bound by residues Lys42, Met74, and Arg88. Residues 89-91 (GLR), Glu99, and 124-130 (WSFISSS) contribute to the ATP site.

Belongs to the bacterial CoaD family. Homohexamer. Mg(2+) serves as cofactor.

Its subcellular location is the cytoplasm. It carries out the reaction (R)-4'-phosphopantetheine + ATP + H(+) = 3'-dephospho-CoA + diphosphate. Its pathway is cofactor biosynthesis; coenzyme A biosynthesis; CoA from (R)-pantothenate: step 4/5. Functionally, reversibly transfers an adenylyl group from ATP to 4'-phosphopantetheine, yielding dephospho-CoA (dPCoA) and pyrophosphate. This chain is Phosphopantetheine adenylyltransferase, found in Citrobacter koseri (strain ATCC BAA-895 / CDC 4225-83 / SGSC4696).